A 139-amino-acid chain; its full sequence is Protein FAM237B (139 aa).

The signal sequence occupies residues 1-24; it reads MCFATRRWFYLHLGCMMLINLVNA. M112 is subject to Methionine amide. Residues 113 to 139 constitute a propeptide, removed in the mature form; it reads GRRQVMPPKYNFPQKITGGNLNVYLRE.

In terms of processing, the active form requires C-terminal amidation and disulfide bond formation.

The protein localises to the secreted. May be capable of activating GPR83 via the GNAQ signaling pathway. In Homo sapiens (Human), this protein is Protein FAM237B.